Reading from the N-terminus, the 244-residue chain is Salivary antigen-5 (244 aa).

An N-terminal signal peptide occupies residues 1–23 (MAKAHSSLVFCLLALALVRFAQA). An SCP domain is found at 46-202 (LDFHNKFREL…WYTGYLVCNY (157 aa)). N-linked (GlcNAc...) asparagine glycans are attached at residues Asn-106 and Asn-172.

It belongs to the CRISP family. Venom allergen 5-like subfamily. Salivary gland (at protein level).

It localises to the secreted. Its function is as follows. Inhibits host platelet aggregation induced by low doses of collagen. This Triatoma infestans (Assassin bug) protein is Salivary antigen-5.